A 263-amino-acid polypeptide reads, in one-letter code: Shikimate dehydrogenase (NADP(+)) (263 aa).

Residues 16–18 and T65 contribute to the shikimate site; that span reads SKS. Residue K69 is the Proton acceptor of the active site. 2 residues coordinate shikimate: N90 and D105. NADP(+) contacts are provided by residues 125 to 129 and L208; that span reads GSGGS. Y210 contacts shikimate. G230 contributes to the NADP(+) binding site.

Belongs to the shikimate dehydrogenase family. As to quaternary structure, homodimer.

It carries out the reaction shikimate + NADP(+) = 3-dehydroshikimate + NADPH + H(+). It participates in metabolic intermediate biosynthesis; chorismate biosynthesis; chorismate from D-erythrose 4-phosphate and phosphoenolpyruvate: step 4/7. Involved in the biosynthesis of the chorismate, which leads to the biosynthesis of aromatic amino acids. Catalyzes the reversible NADPH linked reduction of 3-dehydroshikimate (DHSA) to yield shikimate (SA). In Helicobacter acinonychis (strain Sheeba), this protein is Shikimate dehydrogenase (NADP(+)).